Reading from the N-terminus, the 136-residue chain is Large ribosomal subunit protein uL13 (136 aa).

It belongs to the universal ribosomal protein uL13 family. Part of the 50S ribosomal subunit.

This protein is one of the early assembly proteins of the 50S ribosomal subunit, although it is not seen to bind rRNA by itself. It is important during the early stages of 50S assembly. The protein is Large ribosomal subunit protein uL13 of Thermoplasma volcanium (strain ATCC 51530 / DSM 4299 / JCM 9571 / NBRC 15438 / GSS1).